We begin with the raw amino-acid sequence, 557 residues long: CTP synthase (557 aa).

The segment at 1–270 (MTKYVFVTGG…DAIICEELKL (270 aa)) is amidoligase domain. Ser-13 is a binding site for CTP. A UTP-binding site is contributed by Ser-13. ATP contacts are provided by residues 14–19 (SLGKGI) and Asp-71. Residues Asp-71 and Glu-144 each coordinate Mg(2+). Residues 151 to 153 (DIE), 191 to 196 (KTKPTQ), and Lys-227 each bind CTP. UTP is bound by residues 191-196 (KTKPTQ) and Lys-227. The Glutamine amidotransferase type-1 domain maps to 295–547 (TIGMVGKYVD…VEAALAHHEA (253 aa)). Gly-356 contacts L-glutamine. The Nucleophile; for glutamine hydrolysis role is filled by Cys-383. Residues 384 to 387 (LGMQ), Glu-407, and Arg-473 contribute to the L-glutamine site. Active-site residues include His-520 and Glu-522.

Belongs to the CTP synthase family. In terms of assembly, homotetramer.

The catalysed reaction is UTP + L-glutamine + ATP + H2O = CTP + L-glutamate + ADP + phosphate + 2 H(+). It carries out the reaction L-glutamine + H2O = L-glutamate + NH4(+). It catalyses the reaction UTP + NH4(+) + ATP = CTP + ADP + phosphate + 2 H(+). The protein operates within pyrimidine metabolism; CTP biosynthesis via de novo pathway; CTP from UDP: step 2/2. With respect to regulation, allosterically activated by GTP, when glutamine is the substrate; GTP has no effect on the reaction when ammonia is the substrate. The allosteric effector GTP functions by stabilizing the protein conformation that binds the tetrahedral intermediate(s) formed during glutamine hydrolysis. Inhibited by the product CTP, via allosteric rather than competitive inhibition. Catalyzes the ATP-dependent amination of UTP to CTP with either L-glutamine or ammonia as the source of nitrogen. Regulates intracellular CTP levels through interactions with the four ribonucleotide triphosphates. This Paraburkholderia phytofirmans (strain DSM 17436 / LMG 22146 / PsJN) (Burkholderia phytofirmans) protein is CTP synthase.